The primary structure comprises 895 residues: Protein translocase subunit SecA (895 aa).

Residues glutamine 90, 108–112, and aspartate 498 contribute to the ATP site; that span reads GEGKS.

Belongs to the SecA family.

It localises to the plastid. Its subcellular location is the chloroplast stroma. The protein resides in the chloroplast thylakoid membrane. It catalyses the reaction ATP + H2O + cellular proteinSide 1 = ADP + phosphate + cellular proteinSide 2.. In terms of biological role, has a central role in coupling the hydrolysis of ATP to the transfer of proteins across the thylakoid membrane. The protein is Protein translocase subunit SecA of Cyanidium caldarium (Red alga).